The chain runs to 130 residues: YopE regulator (130 aa).

Its function is as follows. Positive regulator of YopE. The sequence is that of YopE regulator (yerA) from Yersinia pestis.